The following is a 202-amino-acid chain: CASP-like protein 2B2 (202 aa).

The Cytoplasmic portion of the chain corresponds to 1-29 (MSYLGVGVSPGNVPVYHGMNLKVIDRRVR). The helical transmembrane segment at 30–50 (LAELVLRCVICALGVLAAVLV) threads the bilayer. Residues 51 to 72 (GTDTQVKEIFSIQKKARFTDMK) are Extracellular-facing. Residues 73-93 (ALVFLVVANGIAAAYSLVQGV) form a helical membrane-spanning segment. The Cytoplasmic segment spans residues 94 to 118 (RCVVGMVKGSVLFSKPLAWVIFSGD). Residues 119 to 139 (QMMAYLTLSAVAAAVQSASFA) traverse the membrane as a helical segment. Over 140–164 (KLGQPDLQWMKICNMYGKFCNQVGE) the chain is Extracellular. A helical transmembrane segment spans residues 165–185 (GIASALLVSVSMVVLSCISSF). Residues 186–202 (SLFRLYGGNKGKDGARW) are Cytoplasmic-facing.

This sequence belongs to the Casparian strip membrane proteins (CASP) family. Homodimer and heterodimers.

It is found in the cell membrane. The polypeptide is CASP-like protein 2B2 (Populus trichocarpa (Western balsam poplar)).